A 136-amino-acid chain; its full sequence is uncharacterized protein (136 aa).

The protein localises to the mitochondrion. This is an uncharacterized protein from Arabidopsis thaliana (Mouse-ear cress).